Here is a 101-residue protein sequence, read N- to C-terminus: NAD(P)H-quinone oxidoreductase subunit 4L, chloroplastic (101 aa).

3 helical membrane passes run 2–22 (MLEH…YGLI), 32–52 (MCLE…SDFF), and 61–81 (IFSI…PAIV).

This sequence belongs to the complex I subunit 4L family. As to quaternary structure, NDH is composed of at least 16 different subunits, 5 of which are encoded in the nucleus.

It localises to the plastid. The protein localises to the chloroplast thylakoid membrane. It carries out the reaction a plastoquinone + NADH + (n+1) H(+)(in) = a plastoquinol + NAD(+) + n H(+)(out). It catalyses the reaction a plastoquinone + NADPH + (n+1) H(+)(in) = a plastoquinol + NADP(+) + n H(+)(out). Functionally, NDH shuttles electrons from NAD(P)H:plastoquinone, via FMN and iron-sulfur (Fe-S) centers, to quinones in the photosynthetic chain and possibly in a chloroplast respiratory chain. The immediate electron acceptor for the enzyme in this species is believed to be plastoquinone. Couples the redox reaction to proton translocation, and thus conserves the redox energy in a proton gradient. The chain is NAD(P)H-quinone oxidoreductase subunit 4L, chloroplastic from Fagopyrum esculentum subsp. ancestrale (Wild buckwheat).